Consider the following 233-residue polypeptide: Putative N-acetylmannosamine-6-phosphate 2-epimerase (233 aa).

This sequence belongs to the NanE family.

It carries out the reaction an N-acyl-D-glucosamine 6-phosphate = an N-acyl-D-mannosamine 6-phosphate. It functions in the pathway amino-sugar metabolism; N-acetylneuraminate degradation; D-fructose 6-phosphate from N-acetylneuraminate: step 3/5. Converts N-acetylmannosamine-6-phosphate (ManNAc-6-P) to N-acetylglucosamine-6-phosphate (GlcNAc-6-P). This is Putative N-acetylmannosamine-6-phosphate 2-epimerase from Yersinia pestis bv. Antiqua (strain Antiqua).